A 786-amino-acid polypeptide reads, in one-letter code: Cyclin-F (786 aa).

The short motif at 20–28 (KRRIRRRPR) is the Nuclear localization signal 1 element. Positions 29–76 (NLTILSLPEDVLFHILKWLSVEDILAVRAVHSQLKDLVDNHASVWACA) constitute an F-box domain. A Cyclin N-terminal domain is found at 288 to 405 (QASQAVSKQQ…EIVSALEGKI (118 aa)). 4 short sequence motifs (d box) span residues 310-313 (RYIL), 343-346 (RRRL), 349-352 (RYRL), and 351-354 (RLQL). Disordered stretches follow at residues 564–593 (SPSG…TAEL) and 675–738 (TQIP…HTQP). Residues 568-574 (RRTKRKR) carry the Nuclear localization signal 2 motif. The tract at residues 582 to 766 (RGSFVTTPTA…ESSVPQQQVK (185 aa)) is PEST. A compositionally biased stretch (low complexity) spans 697–714 (VTTSGYSSVSTASPTSSV). Residues 723-738 (QPTSVLSLDSDSHTQP) show a composition bias toward polar residues. The short motif at 767–770 (RINL) is the D box 5 element.

This sequence belongs to the cyclin family. Cyclin AB subfamily. As to quaternary structure, component of the SCF(CCNF) complex consisting of CUL1, RBX1, SKP1 and CCNF. Interacts with SKP1. Interacts with CUL1. Interacts with CCNB1; interaction is required for nuclear localization of CCNB1. Interacts with CCP110; this interaction leads to CCP110 ubiquitination and degradation via the proteasome pathway. Interacts (via the Cyclin N-terminal domain) with MYBL2/BMYB. Interacts with FZR1/CDH1 (via N-terminus). Interacts with RRM2 (via Cy motif and when phosphorylated at 'Thr-33'); the interaction occurs exclusively in G2 and early M. Interacts with CDC6 (via Cy motif); the interaction takes place during G2 and M phase. In terms of processing, degraded when the spindle assembly checkpoint is activated during the G2-M transition. Degradation depends on the C-terminal PEST sequence. Post-translationally, phosphorylated just before cells enter into mitosis. Ubiquitinated by the anaphase-promoting complex (APC/C); leading to its degradation by the proteasome. In terms of tissue distribution, widely expressed, with expression detected in the heart, brain, placenta, lung, liver, skeletal muscle, kidney and pancreas.

Its subcellular location is the nucleus. The protein localises to the cytoplasm. It is found in the perinuclear region. It localises to the cytoskeleton. The protein resides in the microtubule organizing center. Its subcellular location is the centrosome. The protein localises to the centriole. In terms of biological role, substrate recognition component of a SCF (SKP1-CUL1-F-box protein) E3 ubiquitin-protein ligase complex which mediates the ubiquitination and subsequent proteasomal degradation of target proteins. The SCF(CCNF) E3 ubiquitin-protein ligase complex is an integral component of the ubiquitin proteasome system (UPS) and links proteasome degradation to the cell cycle. Mediates the substrate recognition and the proteasomal degradation of various target proteins involved in the regulation of cell cycle progression and in the maintenance of genome stability. Mediates the ubiquitination and proteasomal degradation of CP110 during G2 phase, thereby acting as an inhibitor of centrosome reduplication. In G2, mediates the ubiquitination and subsequent degradation of ribonucleotide reductase RRM2, thereby maintaining a balanced pool of dNTPs and genome integrity. In G2, mediates the ubiquitination and proteasomal degradation of CDC6, thereby suppressing DNA re-replication and preventing genome instability. Involved in the ubiquitination and degradation of the substrate adapter CDH1 of the anaphase-promoting complex (APC/C), thereby acting as an antagonist of APC/C in regulating G1 progression and S phase entry. May play a role in the G2 cell cycle checkpoint control after DNA damage, possibly by promoting the ubiquitination of MYBL2/BMYB. This chain is Cyclin-F (CCNF), found in Homo sapiens (Human).